Reading from the N-terminus, the 123-residue chain is Small ribosomal subunit protein uS12 (123 aa).

3-methylthioaspartic acid is present on aspartate 89.

This sequence belongs to the universal ribosomal protein uS12 family. Part of the 30S ribosomal subunit. Contacts proteins S8 and S17. May interact with IF1 in the 30S initiation complex.

In terms of biological role, with S4 and S5 plays an important role in translational accuracy. Its function is as follows. Interacts with and stabilizes bases of the 16S rRNA that are involved in tRNA selection in the A site and with the mRNA backbone. Located at the interface of the 30S and 50S subunits, it traverses the body of the 30S subunit contacting proteins on the other side and probably holding the rRNA structure together. The combined cluster of proteins S8, S12 and S17 appears to hold together the shoulder and platform of the 30S subunit. The polypeptide is Small ribosomal subunit protein uS12 (Gluconacetobacter diazotrophicus (strain ATCC 49037 / DSM 5601 / CCUG 37298 / CIP 103539 / LMG 7603 / PAl5)).